We begin with the raw amino-acid sequence, 183 residues long: Putative 3-methyladenine DNA glycosylase (183 aa).

It belongs to the DNA glycosylase MPG family.

The sequence is that of Putative 3-methyladenine DNA glycosylase from Legionella pneumophila (strain Lens).